A 113-amino-acid polypeptide reads, in one-letter code: Hydrogenase maturation factor HybF (113 aa).

Ni(2+)-binding residues include His2 and Glu3. Zn(2+)-binding residues include Cys73, Cys76, Cys89, and Cys92.

The protein belongs to the HypA/HybF family. HybF subfamily.

Involved in the maturation of [NiFe] hydrogenases. Required for nickel insertion into the metal center of the hydrogenase. The polypeptide is Hydrogenase maturation factor HybF (Morganella morganii (Proteus morganii)).